We begin with the raw amino-acid sequence, 265 residues long: Flap endonuclease Xni (265 aa).

Residue aspartate 111 participates in Mg(2+) binding. The 94-residue stretch at 167 to 260 (VVPAQLVDFW…NLREIRYPPA (94 aa)) folds into the 5'-3' exonuclease domain. The K(+) site is built by leucine 178, valine 189, and isoleucine 192. The segment at 191–196 (GIGPKT) is interaction with DNA.

It belongs to the Xni family. Mg(2+) is required as a cofactor. K(+) serves as cofactor.

Functionally, has flap endonuclease activity. During DNA replication, flap endonucleases cleave the 5'-overhanging flap structure that is generated by displacement synthesis when DNA polymerase encounters the 5'-end of a downstream Okazaki fragment. The sequence is that of Flap endonuclease Xni from Aeromonas salmonicida (strain A449).